A 322-amino-acid chain; its full sequence is 4-diphosphocytidyl-2-C-methyl-D-erythritol kinase (322 aa).

K27 is a catalytic residue. ATP is bound at residue 112-122; sequence PVAGGMAGGSA. D154 is an active-site residue.

It belongs to the GHMP kinase family. IspE subfamily.

It carries out the reaction 4-CDP-2-C-methyl-D-erythritol + ATP = 4-CDP-2-C-methyl-D-erythritol 2-phosphate + ADP + H(+). Its pathway is isoprenoid biosynthesis; isopentenyl diphosphate biosynthesis via DXP pathway; isopentenyl diphosphate from 1-deoxy-D-xylulose 5-phosphate: step 3/6. Its function is as follows. Catalyzes the phosphorylation of the position 2 hydroxy group of 4-diphosphocytidyl-2C-methyl-D-erythritol. The chain is 4-diphosphocytidyl-2-C-methyl-D-erythritol kinase from Mycolicibacterium smegmatis (strain ATCC 700084 / mc(2)155) (Mycobacterium smegmatis).